A 186-amino-acid chain; its full sequence is uncharacterized protein (186 aa).

Disordered regions lie at residues 17-47 (LSGE…EETF), 77-105 (EDKL…AAEA), and 121-164 (QQAA…PVAG). The segment covering 90 to 105 (PLAARPPSQAAAAAEA) has biased composition (low complexity). Positions 136–149 (PEPDPEPADEAAEE) are enriched in acidic residues.

This is an uncharacterized protein from Homo sapiens (Human).